Consider the following 449-residue polypeptide: Transcription factor AP-2 gamma (449 aa).

Lys10 participates in a covalent cross-link: Glycyl lysine isopeptide (Lys-Gly) (interchain with G-Cter in SUMO). The disordered stretch occupies residues 13 to 58; that stretch reads EDCEDRHDSSSNGNPRIPHLSSPGQHLYSPAPPLSHTGVAEYQPPP. The PPxY motif signature appears at 59–64; sequence YFPPPY. The interval 94–130 is disordered; sequence AATGSQQQAWPGRQSQEGSSLASHHSRSASLIPHISG. The span at 95 to 111 shows a compositional bias: polar residues; the sequence is ATGSQQQAWPGRQSQEG. A compositionally biased stretch (low complexity) spans 112 to 124; it reads SSLASHHSRSASL. Ser251 is subject to Phosphoserine; by PKA. Positions 292–423 are H-S-H (helix-span-helix), dimerization; that stretch reads RRKAAHVTLL…YIKEALIAID (132 aa). Positions 426-449 are disordered; the sequence is YMNPGDQSPADSSKTMEKMEKHRK. Ser433 is modified (phosphoserine). A compositionally biased stretch (basic and acidic residues) spans 439-449; that stretch reads KTMEKMEKHRK.

Belongs to the AP-2 family. Binds DNA as a dimer. Can form homodimers or heterodimers with other AP-2 family members. Interacts with WWOX. Interacts with UBE2I. Interacts with KCTD1; this interaction represses transcription activation. Interacts with CITED2 (via C-terminus); the interaction stimulates TFAP2B-transcriptional activity. Interacts with CITED4. Interacts with MTA1. Post-translationally, sumoylated on Lys-10; which inhibits transcriptional activity. In terms of tissue distribution, expressed in lung, ovary and testis. Expressed in most squamous epithelia. Also, detected in several exocrine glands including the prostate, the preputial and salivary glands, serous glands of the tongue and ocular harderian glands.

The protein localises to the nucleus. Its function is as follows. Sequence-specific DNA-binding transcription factor that interacts with cellular enhancer elements to regulate transcription of selected genes, and which plays a key role in early embryonic development. AP-2 factors bind to the consensus sequence 5'-GCCNNNGGC-3' and activate genes involved in a large spectrum of important biological functions. TFAP2C plays a key role in early embryonic development by regulating both inner cell mass (ICM) and trophectoderm differentiation. At the 8-cell stage, during morula development, controls expression of cell-polarity genes. Upon trophoblast commitment, binds to late trophectoderm genes in blastocysts together with CDX2, and later to extra-embryonic ectoderm genes together with SOX2. Binds to both closed and open chromatin with other transcription factors. The protein is Transcription factor AP-2 gamma of Mus musculus (Mouse).